We begin with the raw amino-acid sequence, 470 residues long: Uronate isomerase (470 aa).

The protein belongs to the metallo-dependent hydrolases superfamily. Uronate isomerase family.

It carries out the reaction D-glucuronate = D-fructuronate. It catalyses the reaction aldehydo-D-galacturonate = keto-D-tagaturonate. The protein operates within carbohydrate metabolism; pentose and glucuronate interconversion. The chain is Uronate isomerase from Cronobacter sakazakii (strain ATCC BAA-894) (Enterobacter sakazakii).